We begin with the raw amino-acid sequence, 412 residues long: Glutamate dehydrogenase (412 aa).

Lys-102 is an active-site residue.

Belongs to the Glu/Leu/Phe/Val dehydrogenases family. In roots, stems, leaves and flowers but not in fruits.

The protein resides in the mitochondrion matrix. The catalysed reaction is L-glutamate + NAD(+) + H2O = 2-oxoglutarate + NH4(+) + NADH + H(+). It catalyses the reaction L-glutamate + NADP(+) + H2O = 2-oxoglutarate + NH4(+) + NADPH + H(+). The chain is Glutamate dehydrogenase (GDH1) from Solanum lycopersicum (Tomato).